Consider the following 442-residue polypeptide: Mirror-image polydactyly gene 1 protein (442 aa).

Residues 1 to 39 are disordered; that stretch reads MENWSKDITHSYLEQETTGINKSTQPDEQLTMNSEKSMH. Polar residues predominate over residues 12–35; the sequence is YLEQETTGINKSTQPDEQLTMNSE. Coiled coils occupy residues 107 to 212 and 253 to 435; these read SDKE…LENI and ECKM…KVGT.

As to expression, expressed very weakly in heart, liver, skeletal muscle, kidney, pancreas and fetal kidney. Not detected in brain, placenta and lung.

In Homo sapiens (Human), this protein is Mirror-image polydactyly gene 1 protein (MIPOL1).